The primary structure comprises 314 residues: Cathepsin L 1 (314 aa).

The first 24 residues, 1 to 24 (MMLLGASLYLNNTQEVSDEIDTAN), serve as a signal peptide directing secretion. The propeptide at 25-109 (LYANWKMKYN…NAANSNFQYK (85 aa)) is activation peptide. 3 disulfide bridges follow: cysteine 132/cysteine 175, cysteine 166/cysteine 207, and cysteine 259/cysteine 302. The active site involves cysteine 135. Residues histidine 265 and asparagine 282 contribute to the active site.

This sequence belongs to the peptidase C1 family.

Its subcellular location is the secreted. The enzyme catalyses Specificity close to that of papain. As compared to cathepsin B, cathepsin L exhibits higher activity toward protein substrates, but has little activity on Z-Arg-Arg-NHMec, and no peptidyl-dipeptidase activity.. May be involved in extracellular digestion. This chain is Cathepsin L 1, found in Paramecium tetraurelia.